Consider the following 819-residue polypeptide: Sulfate permease 2 (819 aa).

N-linked (GlcNAc...) asparagine glycosylation is present at Asn-24. The next 10 helical transmembrane spans lie at 72–92 (YNLTWLLGDFIAGVTVGFVVV), 104–124 (LAPEYGLYTSFVGFVLYWAFA), 129–149 (ITIGAVAVMSTIVGNIIANVQ), 172–192 (LLFLGLIRFGFIVEFIPIVAI), 194–214 (AFMTGSAISIAAGQVSTLMGI), 273–293 (FFVSTLRMVFIIILYILVSWL), 328–348 (ILSAISGDIPTTILVLLIEHI), 365–385 (SQELVAIGFTNLLGPFLGGYP), 454–474 (FWLTSPLEVVIFFAGVFVSIF), and 477–497 (IENGIYVTVAASGAVLLWRIA). The 158-residue stretch at 551–708 (ELQISTPWPG…ENHKGGVQEV (158 aa)) folds into the STAS domain. N-linked (GlcNAc...) asparagine glycosylation occurs at Asn-581. The segment at 726 to 766 (EAVPVGTSGSGSTDEKRPEGEGGATNGGMEKGSANGEDIST) is disordered. The segment covering 746–755 (EGGATNGGME) has biased composition (gly residues).

Belongs to the SLC26A/SulP transporter (TC 2.A.53) family. Mainly found in mycelia.

It is found in the membrane. Its function is as follows. Uptake of sulfate into the cell. The polypeptide is Sulfate permease 2 (cys-14) (Neurospora crassa (strain ATCC 24698 / 74-OR23-1A / CBS 708.71 / DSM 1257 / FGSC 987)).